We begin with the raw amino-acid sequence, 307 residues long: Taste receptor type 2 member 10 (307 aa).

Residues 1 to 6 (MLRVVE) are Extracellular-facing. Residues 7 to 27 (GIFIFVVISESVFGVLGNGFI) form a helical membrane-spanning segment. The Cytoplasmic portion of the chain corresponds to 28-42 (GLVNCIDCAKNKLST). Residues 43 to 63 (IGFILTGLAISRIFLIWIIIT) traverse the membrane as a helical segment. The Extracellular portion of the chain corresponds to 64–100 (DGFIQIFSPNIYASSNLIEYISYFWVIGNQSSMWFAT). A helical transmembrane segment spans residues 101–121 (SLSIFYFLKIANFSNYIFLWL). Topologically, residues 122–126 (KSRTN) are cytoplasmic. A helical transmembrane segment spans residues 127 to 147 (MVLPFMIVFLLISSLLNFAYI). The Extracellular segment spans residues 148-179 (AKILNDYKMKNDTVWDLNMYKSEYFIKQILLN). N-linked (GlcNAc...) asparagine glycosylation occurs at Asn158. The chain crosses the membrane as a helical span at residues 180–200 (LGVIFFFTLSLITCVLLIISL). Over 201 to 227 (WRHNRQMQSNVTGLRDSNTEAHVKAMK) the chain is Cytoplasmic. Residues 228 to 248 (VLISFIILFILYFIGMAIEIS) traverse the membrane as a helical segment. Residues 249 to 257 (YFTVRENKL) are Extracellular-facing. A helical membrane pass occupies residues 258–278 (LLMFGMTTTAIYPWGHSFILI). Topologically, residues 279–307 (LGNSKLKQASLRVLQQLKCCEKRKNLRVT) are cytoplasmic.

This sequence belongs to the G-protein coupled receptor T2R family.

It is found in the membrane. In terms of biological role, receptor that may play a role in the perception of bitterness and is gustducin-linked. May play a role in sensing the chemical composition of the gastrointestinal content. The activity of this receptor may stimulate alpha gustducin, mediate PLC-beta-2 activation and lead to the gating of TRPM5. In Pan paniscus (Pygmy chimpanzee), this protein is Taste receptor type 2 member 10 (TAS2R10).